We begin with the raw amino-acid sequence, 403 residues long: Dynactin subunit 2 (403 aa).

The interval 1–26 (MADPKYADLPGIARNEPDVYETSDLP) is disordered. Position 2 is an N-acetylalanine (alanine 2). At tyrosine 6 the chain carries Phosphotyrosine. Serine 83 is subject to Phosphoserine. Phosphotyrosine is present on tyrosine 86. The stretch at 100-130 (QQKYQRLLHEVQELTTEVEKIKTTVKESATE) forms a coiled coil. Residues threonine 134 and threonine 200 each carry the phosphothreonine modification. The tract at residues 184–204 (TKNSKGTGSGGKTTSGTPPDS) is disordered. Residues 216–248 (EQDKFSQAAKVAELEKRLTELEATVRCDQDAQN) are a coiled coil. Phosphoserine is present on serine 322.

Belongs to the dynactin subunit 2 family. Subunit of dynactin, a multiprotein complex part of a tripartite complex with dynein and a adapter, such as BICDL1, BICD2 or HOOK3. The dynactin complex is built around ACTR1A/ACTB filament and consists of an actin-related filament composed of a shoulder domain, a pointed end and a barbed end. Its length is defined by its flexible shoulder domain. The soulder is composed of 2 DCTN1 subunits, 4 DCTN2 and 2 DCTN3. The 4 DCNT2 (via N-terminus) bind the ACTR1A filament and act as molecular rulers to determine the length. The pointed end is important for binding dynein-dynactin cargo adapters and consists of 4 subunits: ACTR10, DCNT4, DCTN5 and DCTN6. The barbed end is composed of a CAPZA1:CAPZB heterodimers, which binds ACTR1A/ACTB filament and dynactin and stabilizes dynactin. Interacts with BICD2 and CEP135. Interacts with DYNAP. Interacts with ECPAS. Interacts with MAPRE1.

It localises to the cytoplasm. It is found in the cytoskeleton. The protein resides in the microtubule organizing center. Its subcellular location is the centrosome. The protein localises to the membrane. Its function is as follows. Part of the dynactin complex that activates the molecular motor dynein for ultra-processive transport along microtubules. In the dynactin soulder domain, binds the ACTR1A filament and acts as a molecular ruler to determine the length. Modulates cytoplasmic dynein binding to an organelle, and plays a role in prometaphase chromosome alignment and spindle organization during mitosis. Involved in anchoring microtubules to centrosomes. May play a role in synapse formation during brain development. This chain is Dynactin subunit 2 (DCTN2), found in Bos taurus (Bovine).